The primary structure comprises 719 residues: Serine/threonine-protein kinase PAK 5 (719 aa).

5 disordered regions span residues 1–28 (MFGK…FDPQ), 96–118 (RSNS…RIQG), 226–245 (SPLD…TSRC), 253–298 (SESD…PMMP), and 339–372 (VFSP…GSHQ). The 14-residue stretch at 11 to 24 (ISGPSNFEHRVHTG) folds into the CRIB domain. Residues 25–448 (FDPQEQKFTG…VVSPGDPREY (424 aa)) form a linker region. A Phosphoserine modification is found at S104. Phosphothreonine is present on T107. The segment covering 226 to 244 (SPLDYSFQLTPSRTAGTSR) has biased composition (polar residues). Residues 357-372 (LPQSQSKAGYSSGSHQ) show a composition bias toward polar residues. The Protein kinase domain maps to 449–700 (LDNFIKIGEG…AQELLGHPFL (252 aa)). ATP contacts are provided by residues 455–463 (IGEGSTGIV) and K478. The Proton acceptor role is filled by D568.

It belongs to the protein kinase superfamily. STE Ser/Thr protein kinase family. STE20 subfamily. In terms of assembly, interacts tightly with GTP-bound but not GDP-bound CDC42/p21 and RAC1. Interacts with MARK2, leading to inhibit MARK2 independently of kinase activity. Interacts with RHOD and RHOH. Autophosphorylated when activated by CDC42/p21. Highly expressed in brain and eye. Also expressed in adrenal gland, pancreas, prostate and testes. Within the brain, expression is restricted to neurons. Present in brain but not in kidney, lung and spleen (at protein level).

The protein resides in the mitochondrion. It localises to the cytoplasm. Its subcellular location is the nucleus. The catalysed reaction is L-seryl-[protein] + ATP = O-phospho-L-seryl-[protein] + ADP + H(+). It carries out the reaction L-threonyl-[protein] + ATP = O-phospho-L-threonyl-[protein] + ADP + H(+). Its function is as follows. Serine/threonine protein kinase that plays a role in a variety of different signaling pathways including cytoskeleton regulation, cell migration, proliferation or cell survival. Activation by various effectors including growth factor receptors or active CDC42 and RAC1 results in a conformational change and a subsequent autophosphorylation on several serine and/or threonine residues. Phosphorylates the proto-oncogene RAF1 and stimulates its kinase activity. Promotes cell survival by phosphorylating the BCL2 antagonist of cell death BAD. Phosphorylates CTNND1, probably to regulate cytoskeletal organization and cell morphology. Keeps microtubules stable through MARK2 inhibition and destabilizes the F-actin network leading to the disappearance of stress fibers and focal adhesions. The protein is Serine/threonine-protein kinase PAK 5 of Mus musculus (Mouse).